The primary structure comprises 405 residues: Tyrosine--tRNA ligase (405 aa).

The 'HIGH' region motif lies at 46 to 55 (PTRPDIHLGH). The 'KMSKS' region signature appears at 230–234 (KMSKS). Lys-233 provides a ligand contact to ATP. The 64-residue stretch at 341 to 404 (MGLAALMVKA…GKKKFVKIVV (64 aa)) folds into the S4 RNA-binding domain.

The protein belongs to the class-I aminoacyl-tRNA synthetase family. TyrS type 2 subfamily. In terms of assembly, homodimer.

Its subcellular location is the cytoplasm. It catalyses the reaction tRNA(Tyr) + L-tyrosine + ATP = L-tyrosyl-tRNA(Tyr) + AMP + diphosphate + H(+). In terms of biological role, catalyzes the attachment of tyrosine to tRNA(Tyr) in a two-step reaction: tyrosine is first activated by ATP to form Tyr-AMP and then transferred to the acceptor end of tRNA(Tyr). The polypeptide is Tyrosine--tRNA ligase (Bdellovibrio bacteriovorus (strain ATCC 15356 / DSM 50701 / NCIMB 9529 / HD100)).